Reading from the N-terminus, the 534-residue chain is Glycerophosphodiester transporter GIT2 (534 aa).

12 consecutive transmembrane segments (helical) span residues 63-83 (GAGL…MACL), 96-116 (AISN…LSFG), 135-155 (LIAF…QGFF), 163-183 (FCLG…ASEF), 202-222 (FMID…LWIF), 230-250 (LWRV…FIRL), 289-309 (MIWF…AIIL), 322-342 (WGWS…GAFS), 350-370 (LTLA…SACL), 377-397 (VAAF…GPGG), 417-437 (GIAA…FPAI), and 453-473 (VPFY…FFLC).

This sequence belongs to the major facilitator superfamily. Sugar transporter (TC 2.A.1.1) family.

Its subcellular location is the cell membrane. Probable glycerophosphodiester transporter. Does not possess detectable glycerophosphoinositol (GroPIns) transport activity. Might be involved in the uptake of glycerophosphocholine (GroPCho). The expanded ability to utilize GroPIns and GroPCho results from the organism's pathogenic nature and its need to occupy a variety of environments within its host organism. This possibility is buttressed by the fact that GroPIns and GroPCho are present and abundant in human fluids. In Candida albicans (strain SC5314 / ATCC MYA-2876) (Yeast), this protein is Glycerophosphodiester transporter GIT2.